Here is a 420-residue protein sequence, read N- to C-terminus: Probable pectate lyase C (420 aa).

A signal peptide spans 1–20 (MKLSAPLLVSLAAFSQAVTA). N-linked (GlcNAc...) asparagine glycans are attached at residues Asn-49, Asn-165, and Asn-202. Arg-205 is a catalytic residue. The EF-hand domain maps to 262–297 (NANFHGYVQNNYYDPDKDGQLDGFELGVSSSNYGGV). Ca(2+) contacts are provided by Asp-275, Asp-277, Asp-279, Gln-281, and Glu-286. The tract at residues 358–396 (TMGGPGTLNGGTPAKDTDGDGIPDEAEKQLGTDPNTNDS) is disordered. A glycan (N-linked (GlcNAc...) asparagine) is linked at Asn-394.

The protein belongs to the polysaccharide lyase 1 family. Requires Ca(2+) as cofactor.

Its subcellular location is the secreted. The catalysed reaction is Eliminative cleavage of (1-&gt;4)-alpha-D-galacturonan to give oligosaccharides with 4-deoxy-alpha-D-galact-4-enuronosyl groups at their non-reducing ends.. Its function is as follows. Pectinolytic enzyme consist of four classes of enzymes: pectin lyase, polygalacturonase, pectin methylesterase and rhamnogalacturonase. Among pectinolytic enzymes, pectin lyase is the most important in depolymerization of pectin, since it cleaves internal glycosidic bonds of highly methylated pectins. Favors pectate, the anion, over pectin, the methyl ester. The polypeptide is Probable pectate lyase C (plyC) (Aspergillus fumigatus (strain CBS 144.89 / FGSC A1163 / CEA10) (Neosartorya fumigata)).